The primary structure comprises 833 residues: Leucine--tRNA ligase (833 aa).

The short motif at 41–52 is the 'HIGH' region element; it reads PYPSGAGLHVGH. The 'KMSKS' region signature appears at 610–614; that stretch reads KMSKS. Lys-613 contacts ATP.

The protein belongs to the class-I aminoacyl-tRNA synthetase family.

The protein resides in the cytoplasm. The enzyme catalyses tRNA(Leu) + L-leucine + ATP = L-leucyl-tRNA(Leu) + AMP + diphosphate. The chain is Leucine--tRNA ligase from Streptococcus sanguinis (strain SK36).